Consider the following 903-residue polypeptide: Protein translocase subunit SecA (903 aa).

ATP-binding positions include glutamine 89, 107 to 111 (GEGKT), and aspartate 502. Zn(2+) is bound by residues cysteine 886, cysteine 888, cysteine 897, and histidine 898.

This sequence belongs to the SecA family. Monomer and homodimer. Part of the essential Sec protein translocation apparatus which comprises SecA, SecYEG and auxiliary proteins SecDF-YajC and YidC. Requires Zn(2+) as cofactor.

It localises to the cell inner membrane. It is found in the cytoplasm. The catalysed reaction is ATP + H2O + cellular proteinSide 1 = ADP + phosphate + cellular proteinSide 2.. Functionally, part of the Sec protein translocase complex. Interacts with the SecYEG preprotein conducting channel. Has a central role in coupling the hydrolysis of ATP to the transfer of proteins into and across the cell membrane, serving both as a receptor for the preprotein-SecB complex and as an ATP-driven molecular motor driving the stepwise translocation of polypeptide chains across the membrane. The chain is Protein translocase subunit SecA from Rhizobium meliloti (strain 1021) (Ensifer meliloti).